The following is a 241-amino-acid chain: DnaA regulatory inactivator Hda (241 aa).

Belongs to the DnaA family. HdA subfamily. In terms of assembly, the active form seems to be an ADP-bound monomer. Forms the RIDA complex (regulatory inactivation of DnaA) of ATP-DnaA, ADP-Hda and the DNA-loaded beta sliding clamp (dnaN).

Mediates the interaction of DNA replication initiator protein DnaA with DNA polymerase subunit beta sliding clamp (dnaN). Stimulates hydrolysis of ATP-DnaA to ADP-DnaA, rendering DnaA inactive for reinitiation, a process called regulatory inhibition of DnaA or RIDA. This chain is DnaA regulatory inactivator Hda, found in Citrobacter koseri (strain ATCC BAA-895 / CDC 4225-83 / SGSC4696).